The sequence spans 118 residues: Large ribosomal subunit protein uL18 (118 aa).

The interval 1–24 (MISKPDKNKIRQKRHRRVRGKLSG) is disordered. Basic residues predominate over residues 10-20 (IRQKRHRRVRG).

This sequence belongs to the universal ribosomal protein uL18 family. As to quaternary structure, part of the 50S ribosomal subunit; part of the 5S rRNA/L5/L18/L25 subcomplex. Contacts the 5S and 23S rRNAs.

Its function is as follows. This is one of the proteins that bind and probably mediate the attachment of the 5S RNA into the large ribosomal subunit, where it forms part of the central protuberance. This is Large ribosomal subunit protein uL18 from Streptococcus mutans serotype c (strain ATCC 700610 / UA159).